Reading from the N-terminus, the 364-residue chain is Aminomethyltransferase (364 aa).

Belongs to the GcvT family. In terms of assembly, the glycine cleavage system is composed of four proteins: P, T, L and H.

The enzyme catalyses N(6)-[(R)-S(8)-aminomethyldihydrolipoyl]-L-lysyl-[protein] + (6S)-5,6,7,8-tetrahydrofolate = N(6)-[(R)-dihydrolipoyl]-L-lysyl-[protein] + (6R)-5,10-methylene-5,6,7,8-tetrahydrofolate + NH4(+). Functionally, the glycine cleavage system catalyzes the degradation of glycine. The sequence is that of Aminomethyltransferase from Staphylococcus carnosus (strain TM300).